Reading from the N-terminus, the 378-residue chain is uncharacterized protein (378 aa).

This is an uncharacterized protein from Escherichia coli (strain K12).